The sequence spans 949 residues: RNA polymerase-associated protein RapA (949 aa).

In terms of domain architecture, Helicase ATP-binding spans 164-332 (EVADRIAPRV…FARLRLLDPN (169 aa)). Residue 177-184 (DEVGLGKT) coordinates ATP. The DEAH box signature appears at 278-281 (DEAH). In terms of domain architecture, Helicase C-terminal spans 474–628 (RVEWLIDTLK…TCPTGNALQH (155 aa)).

It belongs to the SNF2/RAD54 helicase family. RapA subfamily. Interacts with the RNAP. Has a higher affinity for the core RNAP than for the holoenzyme. Its ATPase activity is stimulated by binding to RNAP.

In terms of biological role, transcription regulator that activates transcription by stimulating RNA polymerase (RNAP) recycling in case of stress conditions such as supercoiled DNA or high salt concentrations. Probably acts by releasing the RNAP, when it is trapped or immobilized on tightly supercoiled DNA. Does not activate transcription on linear DNA. Probably not involved in DNA repair. The protein is RNA polymerase-associated protein RapA of Stutzerimonas stutzeri (strain A1501) (Pseudomonas stutzeri).